Consider the following 2053-residue polypeptide: Cell adhesion molecule DSCAML1 (2053 aa).

The first 18 residues, 1–18 (MWLVTFLLLLDSLHKARP), serve as a signal peptide directing secretion. 9 Ig-like C2-type domains span residues 19–119 (EDVG…NIRI), 115–217 (PNIR…ARLS), 226–310 (PTIL…GILT), 314–396 (PLHV…QTAQ), 408–501 (PRIV…ARIN), 506–586 (PSIR…LSIS), 596–685 (PPLI…RQLI), 690–784 (PRFV…MFLT), and 788–885 (PAMI…LTVQ). At 19–1591 (EDVGTSLYFV…AQGEGDDVKK (1573 aa)) the chain is on the extracellular side. Cystine bridges form between Cys-47/Cys-103, Cys-146/Cys-198, Cys-247/Cys-294, Cys-336/Cys-386, Cys-429/Cys-485, Cys-526/Cys-575, and Cys-617/Cys-669. A glycan (N-linked (GlcNAc...) asparagine) is linked at Asn-79. N-linked (GlcNAc...) asparagine glycosylation is found at Asn-368 and Asn-471. N-linked (GlcNAc...) asparagine glycans are attached at residues Asn-666 and Asn-710. A disulfide bridge links Cys-711 with Cys-767. An N-linked (GlcNAc...) asparagine glycan is attached at Asn-809. The cysteines at positions 810 and 867 are disulfide-linked. Fibronectin type-III domains follow at residues 887 to 984 (PPDP…TEEA), 989 to 1088 (PPMD…TLED), 1093 to 1189 (PPEN…TKED), and 1193 to 1288 (PPAG…AGKA). 2 N-linked (GlcNAc...) asparagine glycosylation sites follow: Asn-1144 and Asn-1162. Positions 1278–1377 (EKVTIEPAGK…TGGFDTIIVN (100 aa)) constitute an Ig-like C2-type 10 domain. Cys-1311 and Cys-1363 are joined by a disulfide. An N-linked (GlcNAc...) asparagine glycan is attached at Asn-1345. 2 Fibronectin type-III domains span residues 1383–1477 (PPDQ…THGR) and 1478–1578 (EPSF…TIPP). Asn-1561 is a glycosylation site (N-linked (GlcNAc...) asparagine). Residues 1592-1612 (LFTIGCPVILATLGVALLFVV) form a helical membrane-spanning segment. Residues 1613 to 2053 (RKKRKEKRLK…GAYSKSYTLV (441 aa)) are Cytoplasmic-facing. 4 disordered regions span residues 1716–1741 (LIDM…HSTR), 1773–1803 (HGVT…STES), 1840–1862 (SSDQ…STPS), and 1974–2053 (LAMP…YTLV). Over residues 1732 to 1741 (KNVKSAHSTR) the composition is skewed to basic residues. Positions 1773 to 1789 (HGVTVTESDSYSASLSQ) are enriched in polar residues. A compositionally biased stretch (pro residues) spans 1977–1993 (PAPPAGTAPPAPGPTPS).

Homodimer; mediates homophilic interactions to promote cell adhesion. As to expression, in the retina, expressed in the rod photoreceptors, AII amacrine cells and rod bipolar cells (at protein level).

The protein localises to the cell membrane. It localises to the synapse. Its function is as follows. Cell adhesion molecule that plays a role in neuronal self-avoidance. Promotes repulsion between specific neuronal processes of either the same cell or the same subtype of cells. Promotes both isoneuronal self-avoidance for creating an orderly neurite arborization in retinal rod bipolar cells and heteroneuronal self-avoidance to maintain mosaic spacing between AII amacrine cells. Adhesion molecule that promotes lamina-specific synaptic connections in the retina: expressed in specific subsets of interneurons and retinal ganglion cells (RGCs) and promotes synaptic connectivity via homophilic interactions. This is Cell adhesion molecule DSCAML1 (Dscaml1) from Mus musculus (Mouse).